A 654-amino-acid chain; its full sequence is Probable replication restart protein PriA (654 aa).

Residues Cys367, Cys370, Cys376, Cys379, Cys395, Cys398, Cys407, and Cys410 each coordinate Zn(2+).

It belongs to the helicase family. PriA subfamily. As to quaternary structure, component of the replication restart primosome. Zn(2+) serves as cofactor.

Its function is as follows. Initiates the restart of stalled replication forks, which reloads the replicative helicase on sites other than the origin of replication. Recognizes and binds to abandoned replication forks and remodels them to uncover a helicase loading site. Promotes assembly of the primosome at these replication forks. This chain is Probable replication restart protein PriA, found in Mycobacterium tuberculosis (strain CDC 1551 / Oshkosh).